We begin with the raw amino-acid sequence, 122 residues long: Small ribosomal subunit protein uS13 (122 aa).

The disordered stretch occupies residues Arg-99 to Lys-122.

This sequence belongs to the universal ribosomal protein uS13 family. In terms of assembly, part of the 30S ribosomal subunit. Forms a loose heterodimer with protein S19. Forms two bridges to the 50S subunit in the 70S ribosome.

Functionally, located at the top of the head of the 30S subunit, it contacts several helices of the 16S rRNA. In the 70S ribosome it contacts the 23S rRNA (bridge B1a) and protein L5 of the 50S subunit (bridge B1b), connecting the 2 subunits; these bridges are implicated in subunit movement. Contacts the tRNAs in the A and P-sites. The polypeptide is Small ribosomal subunit protein uS13 (Rhodopseudomonas palustris (strain HaA2)).